Here is a 22-residue protein sequence, read N- to C-terminus: Sex pheromone inhibitor determinant (22 aa).

A propeptide spanning residues 1–14 (MSKRAMKKIIPLIT) is cleaved from the precursor.

The protein localises to the secreted. Acts as a competitive inhibitor of the CAD1 pheromone. The polypeptide is Sex pheromone inhibitor determinant (iad) (Enterococcus faecalis (strain ATCC 700802 / V583)).